Reading from the N-terminus, the 601-residue chain is DDB1- and CUL4-associated factor 8 (601 aa).

2 stretches are compositionally biased toward polar residues: residues methionine 1–glutamate 24 and valine 46–alanine 60. The disordered stretch occupies residues methionine 1–leucine 150. Residues isoleucine 39–leucine 50 carry the Nuclear export signal motif. Over residues glutamate 61–serine 99 the composition is skewed to basic and acidic residues. A coiled-coil region spans residues asparagine 94–glutamate 131. Acidic residues predominate over residues glutamate 100 to glutamate 113. Over residues arginine 116 to alanine 126 the composition is skewed to basic residues. Basic and acidic residues predominate over residues asparagine 127–aspartate 140. 7 WD repeats span residues glycine 194–glutamate 233, glycine 237–asparagine 278, glutamine 284–arginine 324, glutamate 332–asparagine 372, glutamate 388–tyrosine 427, arginine 435–phenylalanine 475, and aspartate 479–aspartate 519. The tract at residues arginine 561–serine 601 is disordered.

Belongs to the WD repeat DCAF8 family.

It localises to the nucleus. The protein resides in the cytoplasm. This chain is DDB1- and CUL4-associated factor 8 (dcaf8), found in Xenopus laevis (African clawed frog).